Here is a 356-residue protein sequence, read N- to C-terminus: MSLWVDKYRPCSLGQLDYHKEQAAQLRNLVQCGDFPHLLVYGPSGAGKKTRIMCILRELYGVGVEKLRIEHQTITTPSKKKIEISTIASNYHLEVNPSDAGNSDRVVIQEMLKTVAQSQQLETSSQKDFKVVLLTEVDKLTKDAQHALRRTMEKYMSTCRLILCCNSTSKVIPPIRSRCLAVRVPAPSIEDICHVLSTVCKKEGLNLPPQLAHRLAEKSCRNLRKALLMCEACRVQQYPFTADQEIPETDWEVYLRETANAIVSQQTPQRLLEVRGRLYELLTHCIPPEIIMKGLLSELLHNCDGQLKGEVAQMAAYYEHRLQLGSKAIYHLEAFVAKFMALYKKFMEDGLEGMIF.

N6-acetyllysine is present on Lys-20. Position 125 is a phosphoserine (Ser-125).

The protein belongs to the activator 1 small subunits family. In terms of assembly, subunit of the RFC complex, an heteropentameric complex consisting of a large subunit RFC1 and four small subunits RFC2, RFC3, RFC4 and RFC5; the RFC complex interacts with PCNA. Forms an heterotetrameric complex with RFC2, RFC4 and RFC5; this complex has ATPase activity but is not stimulated by PCNA. The heterotetramer of subunits RFC2, RFC3, RFC4 and RFC5 interacts with RAD17. Interacts with CNTD1; this interaction facilitates crossover formation.

It localises to the nucleus. In terms of biological role, subunit of the replication factor C (RFC) complex which acts during elongation of primed DNA templates by DNA polymerases delta and epsilon, and is necessary for ATP-dependent loading of proliferating cell nuclear antigen (PCNA) onto primed DNA. The chain is Replication factor C subunit 3 (RFC3) from Bos taurus (Bovine).